Here is a 471-residue protein sequence, read N- to C-terminus: MSQIVTRFAPSPTGFLHIGGARTALFNWLYARHTGGKMLLRIEDTDRQRSTKEAIAAIIEGLEWLGITCDGDPIYQFARAERHRAAVEEMLAKGNAYRCYATPQELDEMRELARKEGRPPRYDGRWRDRDPSEAPKDRDPVIRLRAPQEGETVIDDMVQGTVTFPNKDLDDLVLLRSDGNPTYMLAVVVDDHDMGVTHVIRGDDHLTNAARQTQIYRALGWEVPRMAHIPLIHGPDGAKLSKRHGALGVDAYRDMGYLPAALRNYLVRLGWSHGDQEVFSTEEMVSFFDLDKVGRSAARFDFQKLESLNGHYMRASSDAELLSAIDALVPHLPDAEHRLARMTPERRAQLAAAMPGLKERAKTLVELVDNAEFIFVERPLPLDDKAAALLSPEARAHLARLVPALEQVEWTAAATEAAVRAYAEAQGVKLGAVAQPLRAALTGKPTSPPIFDVLMVLGRDESLARLKDQAA.

The 'HIGH' region signature appears at 10–20; sequence PSPTGFLHIGG. Positions 113–140 are disordered; the sequence is ARKEGRPPRYDGRWRDRDPSEAPKDRDP. The short motif at 239–243 is the 'KMSKS' region element; it reads KLSKR. K242 provides a ligand contact to ATP.

It belongs to the class-I aminoacyl-tRNA synthetase family. Glutamate--tRNA ligase type 1 subfamily. Monomer.

The protein resides in the cytoplasm. The catalysed reaction is tRNA(Glu) + L-glutamate + ATP = L-glutamyl-tRNA(Glu) + AMP + diphosphate. In terms of biological role, catalyzes the attachment of glutamate to tRNA(Glu) in a two-step reaction: glutamate is first activated by ATP to form Glu-AMP and then transferred to the acceptor end of tRNA(Glu). The sequence is that of Glutamate--tRNA ligase 1 from Xanthobacter autotrophicus (strain ATCC BAA-1158 / Py2).